Reading from the N-terminus, the 460-residue chain is Light-independent protochlorophyllide reductase subunit N (460 aa).

[4Fe-4S] cluster contacts are provided by cysteine 22, cysteine 47, and cysteine 107.

The protein belongs to the BchN/ChlN family. Protochlorophyllide reductase is composed of three subunits; ChlL, ChlN and ChlB. Forms a heterotetramer of two ChlB and two ChlN subunits. [4Fe-4S] cluster is required as a cofactor.

It is found in the plastid. It localises to the cyanelle. The enzyme catalyses chlorophyllide a + oxidized 2[4Fe-4S]-[ferredoxin] + 2 ADP + 2 phosphate = protochlorophyllide a + reduced 2[4Fe-4S]-[ferredoxin] + 2 ATP + 2 H2O. The protein operates within porphyrin-containing compound metabolism; chlorophyll biosynthesis (light-independent). Functionally, component of the dark-operative protochlorophyllide reductase (DPOR) that uses Mg-ATP and reduced ferredoxin to reduce ring D of protochlorophyllide (Pchlide) to form chlorophyllide a (Chlide). This reaction is light-independent. The NB-protein (ChlN-ChlB) is the catalytic component of the complex. The protein is Light-independent protochlorophyllide reductase subunit N of Cyanophora paradoxa.